The primary structure comprises 209 residues: Small ribosomal subunit protein uS5 (209 aa).

One can recognise an S5 DRBM domain in the interval 48–111; sequence LEDEVLDINM…DAAKLNITYI (64 aa).

The protein belongs to the universal ribosomal protein uS5 family. As to quaternary structure, part of the 30S ribosomal subunit. Contacts protein S4.

In terms of biological role, with S4 and S12 plays an important role in translational accuracy. This is Small ribosomal subunit protein uS5 from Methanosarcina mazei (strain ATCC BAA-159 / DSM 3647 / Goe1 / Go1 / JCM 11833 / OCM 88) (Methanosarcina frisia).